The following is a 117-amino-acid chain: Acylphosphatase (117 aa).

Residues 31–117 (RWRWIIQGQV…RGDDWFEVRY (87 aa)) enclose the Acylphosphatase-like domain. Catalysis depends on residues arginine 46 and asparagine 64.

It belongs to the acylphosphatase family.

The catalysed reaction is an acyl phosphate + H2O = a carboxylate + phosphate + H(+). In Synechococcus sp. (strain CC9902), this protein is Acylphosphatase (acyP).